The following is a 124-amino-acid chain: NADH dehydrogenase [ubiquinone] 1 alpha subcomplex subunit 6 (124 aa).

This sequence belongs to the complex I LYR family.

Its subcellular location is the mitochondrion inner membrane. Accessory subunit of the mitochondrial membrane respiratory chain NADH dehydrogenase (Complex I), that is believed to be not involved in catalysis. Complex I functions in the transfer of electrons from NADH to the respiratory chain. The immediate electron acceptor for the enzyme is believed to be ubiquinone. The chain is NADH dehydrogenase [ubiquinone] 1 alpha subcomplex subunit 6 (ndufa6) from Dictyostelium discoideum (Social amoeba).